A 499-amino-acid chain; its full sequence is Pyruvate kinase 1 (499 aa).

Residue Arg-50 participates in substrate binding. Residues Asn-52, Ser-54, Asp-84, and Thr-85 each coordinate K(+). 52–55 (NFSH) serves as a coordination point for ATP. Position 91 (Arg-91) interacts with ATP. Glu-241 provides a ligand contact to Mg(2+). The substrate site is built by Gly-264, Asp-265, and Thr-297. Residue Asp-265 participates in Mg(2+) binding.

Belongs to the pyruvate kinase family. In terms of assembly, homotetramer. Requires Mg(2+) as cofactor. The cofactor is K(+).

It carries out the reaction pyruvate + ATP = phosphoenolpyruvate + ADP + H(+). Its pathway is carbohydrate degradation; glycolysis; pyruvate from D-glyceraldehyde 3-phosphate: step 5/5. Its activity is regulated as follows. Activated by fructose 2,6-bisphosphate, activated by the effector in a cooperative manner. In Trypanosoma brucei brucei, this protein is Pyruvate kinase 1 (PYK1).